A 150-amino-acid chain; its full sequence is Monooxygenase nsrS (150 aa).

The protein belongs to the avfA family.

It functions in the pathway secondary metabolite biosynthesis. Its function is as follows. Monooxygenase; part of the gene cluster that mediates the biosynthesis of the tetrahydroxanthone dimer neosartorin, which exhibits antibacterial activity. The two different monomeric units appear to be synthesized by the same set of enzymes, among which the Baeyer-Villiger monooxygenase nsrF is the key enzyme for the divergence of the biosynthetic routes. The pathway begins with the synthesis of atrochrysone thioester by the polyketide synthase nsrB. The atrochrysone carboxyl ACP thioesterase nsrC then breaks the thioester bond and releases the atrochrysone carboxylic acid from AacuL. Atrochrysone carboxylic acid is decarboxylated by the decarboxylase nsrE, and oxidized by the anthrone oxygenase nsrD to yield emodin. Emodin is then reduced to emodin hydroquinone by the oxidoreductase nsrR. A-ring reduction by the short chain dehydrogenase nsrJ, dehydration by the scytalone dehydratase-like protein nsrI and probable spontaneous re-oxidation, results in overall deoxygenation to chrysophanol. The Baeyer-Villiger monooxygenase nsrF accepts chrysophanol as a substrate to insert one oxygen atom at two different positions to yield the precursors of both monomric units. NsrF is promiscuous/flexible in interacting with the 2 (non methylated and methylated) aromatic rings of chrysophanol, thus diverging the biosynthetic pathway at this point. After the hydrolysis of the lactones, methylesterification by the methyltransferase nsrG yields respectively moniliphenone and 2,2',6'-trihydroxy-4-methyl-6-methoxya-cyldiphenylmethanone. The next steps are the hydroxylation by the FAD-dependent monooxygenase nsrK, followed by isomerization by the monooxygenase nsrQ. The short chain dehydrogenase/reductase nsrO then catalyzes the C-5 ketoreduction to give the xanthone skeleton of blennolide C and 5-acetylblennolide A. The acetyltransferase nsrL has a strict substrate specificity and uses only blennolide A but not blennolide C to yield 5-acetylblennolide A as the single-acetylated product. In the final step of the biosynthesis, the heterodimerization of the 2 xanthones, blennolide C and 5-acetylblennolide A, is catalyzed by the cytochrome P450 monooxygenase nsrP. NsrP can utilize at least three different xanthones as its substrates to perform the dimerization reaction. The polypeptide is Monooxygenase nsrS (Aspergillus novofumigatus (strain IBT 16806)).